Reading from the N-terminus, the 825-residue chain is MDLVDPSQSAAAAAGTQLVKDEVAEKCQKLFQDFLEEFRGSDGELKYQSDAEELIRPERNTLLVSFVDLEQFNQQLATTIQEEFYRVYPYLCRAVKAFARDHGNIPQNKEFYVAFQELPTRHKIRELTTPRIGSLLRISGQVVRTHPVHPELVSGTFLCLDCQTLVRDVEQQFKYTQPSICRNPVCANRKRFMLDTNKSRFVDFQKVRIQETQAELPRGSIPRSVEVILRAEAVESCQAGDRCDFTGSLIVVPDISQLSTPGVRAETSSRVGGREGYEAEGVQGLRALGVRDLSYKLVFLACYVCPTNPRFGGKDLHEEDMTAESIKNQMSVKEWEKVFEMSQDKNLYHNLCTSLFPTVHGNDEVKRGILLMLFGGVPKSTMEGTSLRGDINVCVVGDPSTAKSQFLKHVEEFSPRAVYTSGKASTAAGLTAAVVRDEESHEFVIEAGALMLADNGVCCIDEFDKMDTKDQVAIHEAMEQQTISITKAGVKATLNARTSILAAANPVGGRYDRAKSLKQNVNLSAPIMSRFDLFFILVDECNEVTDYAIARRIVDLHSRIEESIDRVYTLDEVRRYLLFARQFKPKISKESEDFIVEQYKRLRQRDGSGVTKSAWRITVRQLESMIRLSEGMARMHCSDEVQPKHVKEAFRLLNKSIIRVETPDVNLDQEDEHEVEEPQEGINGDADVPNGVNGHINGINGHAEETNAAPPKPSLRLNFAEYKRISNLLVLQLRKIEDEDDENETSQRKSELINWYLKEIESEIDSEEELVNRKQIIDKVIHRLVHYDQILIELIQTGLKGTEDENVAKEEDPYLVVNPNYILED.

The C4-type zinc finger occupies 159–186 (CLDCQTLVRDVEQQFKYTQPSICRNPVC). The 208-residue stretch at 347 to 554 (LYHNLCTSLF…TDYAIARRIV (208 aa)) folds into the MCM domain. 397–404 (GDPSTAKS) contacts ATP. Positions 529–532 (SRFD) match the Arginine finger motif. Over residues 668 to 679 (DQEDEHEVEEPQ) the composition is skewed to acidic residues. The tract at residues 668-690 (DQEDEHEVEEPQEGINGDADVPN) is disordered.

It belongs to the MCM family. As to quaternary structure, component of the mcm2-7 complex (RLF-M). The complex forms a toroidal hexameric ring with the proposed subunit order mcm2-mcm6-mcm4-mcm7-mcm3-mcm5 (By simililarity). Begins to associate with zmcm3, mcm4 and mcm7 into mcm complexes at the neurula stage.

Its subcellular location is the nucleus. It carries out the reaction ATP + H2O = ADP + phosphate + H(+). Functionally, acts as a component of the mcm2-7 complex (mcm complex) which is the putative replicative helicase essential for 'once per cell cycle' DNA replication initiation and elongation in eukaryotic cells. The active ATPase sites in the mcm2-7 ring are formed through the interaction surfaces of two neighboring subunits such that a critical structure of a conserved arginine finger motif is provided in trans relative to the ATP-binding site of the Walker A box of the adjacent subunit. The six ATPase active sites, however, are likely to contribute differentially to the complex helicase activity. The existence of maternal and zygotic forms of mcm3 and mcm6 suggests that specific forms of mcm2-7 complexes may be used during different stages of development. May replace mmcm6 in the mcm2-7 complex. This is Zygotic DNA replication licensing factor mcm6-B (zmcm6-b) from Xenopus laevis (African clawed frog).